We begin with the raw amino-acid sequence, 214 residues long: Leucyl/phenylalanyl-tRNA--protein transferase (214 aa).

The protein belongs to the L/F-transferase family.

Its subcellular location is the cytoplasm. It catalyses the reaction N-terminal L-lysyl-[protein] + L-leucyl-tRNA(Leu) = N-terminal L-leucyl-L-lysyl-[protein] + tRNA(Leu) + H(+). The catalysed reaction is N-terminal L-arginyl-[protein] + L-leucyl-tRNA(Leu) = N-terminal L-leucyl-L-arginyl-[protein] + tRNA(Leu) + H(+). It carries out the reaction L-phenylalanyl-tRNA(Phe) + an N-terminal L-alpha-aminoacyl-[protein] = an N-terminal L-phenylalanyl-L-alpha-aminoacyl-[protein] + tRNA(Phe). Its function is as follows. Functions in the N-end rule pathway of protein degradation where it conjugates Leu, Phe and, less efficiently, Met from aminoacyl-tRNAs to the N-termini of proteins containing an N-terminal arginine or lysine. This is Leucyl/phenylalanyl-tRNA--protein transferase from Cereibacter sphaeroides (strain ATCC 17029 / ATH 2.4.9) (Rhodobacter sphaeroides).